Consider the following 506-residue polypeptide: BTB/POZ domain-containing protein At3g22104 (506 aa).

The BTB domain occupies 6–76; sequence SDLEVDINGE…CYNDGRVAVM (71 aa). An NPH3 domain is found at 187–435; that stretch reads TWWFDEVLVL…LDEQQQQQQQ (249 aa). A coiled-coil region spans residues 421-492; that stretch reads QAIETLDEQQ…MEVIKKRSKS (72 aa). A disordered region spans residues 485–506; it reads VIKKRSKSSSKGSNRSLPKLCS.

The protein belongs to the NPH3 family.

Its pathway is protein modification; protein ubiquitination. May act as a substrate-specific adapter of an E3 ubiquitin-protein ligase complex (CUL3-RBX1-BTB) which mediates the ubiquitination and subsequent proteasomal degradation of target proteins. The protein is BTB/POZ domain-containing protein At3g22104 of Arabidopsis thaliana (Mouse-ear cress).